Reading from the N-terminus, the 230-residue chain is Large ribosomal subunit protein uL1 (230 aa).

The protein belongs to the universal ribosomal protein uL1 family. Part of the 50S ribosomal subunit.

Its function is as follows. Binds directly to 23S rRNA. The L1 stalk is quite mobile in the ribosome, and is involved in E site tRNA release. Functionally, protein L1 is also a translational repressor protein, it controls the translation of the L11 operon by binding to its mRNA. This Limosilactobacillus fermentum (strain NBRC 3956 / LMG 18251) (Lactobacillus fermentum) protein is Large ribosomal subunit protein uL1.